The chain runs to 362 residues: Acetylglutamate kinase (362 aa).

The segment covering 1–11 (MNAPTRTPPPS) has biased composition (pro residues). A disordered region spans residues 1–42 (MNAPTRTPPPSNGGHGSTGSTGSTGDAAPGGGTGRGPAATAR). Residues 106-107 (GG), Arg128, and Asn227 each bind substrate. The interval 329–362 (MAESGTSPEPGTPPAPAARPAGIVPAGEPTGGTP) is disordered. Over residues 346–355 (ARPAGIVPAG) the composition is skewed to low complexity.

This sequence belongs to the acetylglutamate kinase family. ArgB subfamily.

The protein resides in the cytoplasm. It catalyses the reaction N-acetyl-L-glutamate + ATP = N-acetyl-L-glutamyl 5-phosphate + ADP. It participates in amino-acid biosynthesis; L-arginine biosynthesis; N(2)-acetyl-L-ornithine from L-glutamate: step 2/4. Functionally, catalyzes the ATP-dependent phosphorylation of N-acetyl-L-glutamate. This Frankia casuarinae (strain DSM 45818 / CECT 9043 / HFP020203 / CcI3) protein is Acetylglutamate kinase.